The following is a 313-amino-acid chain: WD repeat-containing protein 82 (313 aa).

WD repeat units lie at residues 19–58, 105–144, 146–184, 192–231, 236–276, and 280–313; these read ENSD…PKRT, GHSK…CQGL, HLQG…KGPF, DRTC…VMHT, ANSK…KVAV, and KHTG…TIDD.

Belongs to the WD repeat SWD2 family. In terms of assembly, component of the SET1/COMPASS complex, at least composed of the catalytic subunit (SETD1A or SETD1B), WDR5, WDR82, RBBP5, ASH2L/ASH2, CXXC1/CFP1, HCFC1 and DPY30. Component of the PNUTS-PP1 phosphatase complex, composed of PPP1R10/PNUTS, TOX4, WDR82, and PPP1CA or PPP1CB or PPP1CC. Associated with multiple protein complexes including an RNA polymerase II complex, MLL3/MLL4 complex and a chaperonin-containing TCP1 complex. Interacts with SETD1B (via N-terminal region); the interaction is direct. Interacts with SETD1A (via N-terminal region); the interaction is direct. Interacts with CUL4B. Interacts with RBBP5. Interacts with POLR2B. Interacts with hyperphosphorylated C-terminal domain (CTD) of RNA polymerase II large subunit (POLR2A). Binds specifically to CTD heptad repeats phosphorylated on 'Ser-5' of each heptad. SETD1A enhances its interaction with POLR2A. Interacts with PPP1R10/PNUTS. Interacts with PPP1CA in the presence of PPP1R10/PNUTS. Interacts with ZC3H4; interaction is independent of the SET1 complex and promotes transcription termination of long non-coding RNAs (lncRNAs).

It localises to the nucleus. It is found in the chromosome. Its subcellular location is the cytoplasm. Functionally, regulatory component of the SET1/COMPASS complex implicated in the tethering of this complex to transcriptional start sites of active genes. Facilitates histone H3 'Lys-4' methylation (H3K4me) via recruitment of the SETD1A or SETD1B to the 'Ser-5' phosphorylated C-terminal domain (CTD) of RNA polymerase II large subunit (POLR2A). Component of the PNUTS-PP1 protein phosphatase complex, a protein phosphatase 1 (PP1) complex that promotes RNA polymerase II transcription pause-release, allowing transcription elongation. PNUTS-PP1 also plays a role in the control of chromatin structure and cell cycle progression during the transition from mitosis into interphase. Together with ZC3H4, but independently of the SET1 complex, part of a transcription termination checkpoint that promotes transcription termination of long non-coding RNAs (lncRNAs). The transcription termination checkpoint is activated by the inefficiently spliced first exon of lncRNAs and promotes transcription termination of lncRNAs and their subsequent degradation by the exosome. The sequence is that of WD repeat-containing protein 82 from Homo sapiens (Human).